Here is a 487-residue protein sequence, read N- to C-terminus: Glutamate--tRNA ligase 2 (487 aa).

Residues 31 to 41 (PSPTGHLHVGG) carry the 'HIGH' region motif. The short motif at 254–258 (PLSKR) is the 'KMSKS' region element. Lysine 257 provides a ligand contact to ATP.

The protein belongs to the class-I aminoacyl-tRNA synthetase family. Glutamate--tRNA ligase type 1 subfamily. In terms of assembly, monomer.

It localises to the cytoplasm. The enzyme catalyses tRNA(Glu) + L-glutamate + ATP = L-glutamyl-tRNA(Glu) + AMP + diphosphate. Functionally, catalyzes the attachment of glutamate to tRNA(Glu) in a two-step reaction: glutamate is first activated by ATP to form Glu-AMP and then transferred to the acceptor end of tRNA(Glu). In Thermotoga maritima (strain ATCC 43589 / DSM 3109 / JCM 10099 / NBRC 100826 / MSB8), this protein is Glutamate--tRNA ligase 2.